The chain runs to 88 residues: Putative membrane protein insertion efficiency factor (88 aa).

This sequence belongs to the UPF0161 family.

It is found in the cell membrane. Could be involved in insertion of integral membrane proteins into the membrane. The chain is Putative membrane protein insertion efficiency factor from Exiguobacterium sibiricum (strain DSM 17290 / CCUG 55495 / CIP 109462 / JCM 13490 / 255-15).